The sequence spans 527 residues: Anthranilate synthase component 1 1 (527 aa).

Ser52 provides a ligand contact to L-tryptophan. A disordered region spans residues 53-72 (AEKTPASDPDGAFTPDTTTE). Residue 298-300 (PYM) coordinates L-tryptophan. 333-334 (GT) serves as a coordination point for chorismate. Glu360 contacts Mg(2+). Residues Tyr448, Arg468, 486-488 (GAG), and Gly488 each bind chorismate. Glu501 is a Mg(2+) binding site.

The protein belongs to the anthranilate synthase component I family. Tetramer of two components I and two components II. Mg(2+) serves as cofactor.

The enzyme catalyses chorismate + L-glutamine = anthranilate + pyruvate + L-glutamate + H(+). The protein operates within amino-acid biosynthesis; L-tryptophan biosynthesis; L-tryptophan from chorismate: step 1/5. This chain is Anthranilate synthase component 1 1 (trpE1), found in Halobacterium salinarum (strain ATCC 700922 / JCM 11081 / NRC-1) (Halobacterium halobium).